Reading from the N-terminus, the 102-residue chain is NADH-quinone oxidoreductase subunit K (102 aa).

The next 3 membrane-spanning stretches (helical) occupy residues 5–25 (LGHF…GIFL), 31–51 (IVLL…FVAF), and 62–82 (IFVF…LAIL).

It belongs to the complex I subunit 4L family. In terms of assembly, NDH-1 is composed of 14 different subunits. Subunits NuoA, H, J, K, L, M, N constitute the membrane sector of the complex.

The protein localises to the cell inner membrane. The enzyme catalyses a quinone + NADH + 5 H(+)(in) = a quinol + NAD(+) + 4 H(+)(out). NDH-1 shuttles electrons from NADH, via FMN and iron-sulfur (Fe-S) centers, to quinones in the respiratory chain. The immediate electron acceptor for the enzyme in this species is believed to be ubiquinone. Couples the redox reaction to proton translocation (for every two electrons transferred, four hydrogen ions are translocated across the cytoplasmic membrane), and thus conserves the redox energy in a proton gradient. This is NADH-quinone oxidoreductase subunit K from Albidiferax ferrireducens (strain ATCC BAA-621 / DSM 15236 / T118) (Rhodoferax ferrireducens).